A 693-amino-acid polypeptide reads, in one-letter code: Elongation factor G 1 (693 aa).

The region spanning 4 to 281 (NKLRNIGISA…AVTRFLPSPH (278 aa)) is the tr-type G domain. Residues 13-20 (AHIDSGKT), 80-84 (DTPGH), and 134-137 (NKCD) each bind GTP.

Belongs to the TRAFAC class translation factor GTPase superfamily. Classic translation factor GTPase family. EF-G/EF-2 subfamily.

It localises to the cytoplasm. In terms of biological role, catalyzes the GTP-dependent ribosomal translocation step during translation elongation. During this step, the ribosome changes from the pre-translocational (PRE) to the post-translocational (POST) state as the newly formed A-site-bound peptidyl-tRNA and P-site-bound deacylated tRNA move to the P and E sites, respectively. Catalyzes the coordinated movement of the two tRNA molecules, the mRNA and conformational changes in the ribosome. The sequence is that of Elongation factor G 1 (fusA) from Borreliella burgdorferi (strain ATCC 35210 / DSM 4680 / CIP 102532 / B31) (Borrelia burgdorferi).